Here is an 83-residue protein sequence, read N- to C-terminus: RNA-binding protein Hfq (83 aa).

The Sm domain maps to 10–70 (DAFLNQVRKE…ISTVSPLKPV (61 aa)).

The protein belongs to the Hfq family. As to quaternary structure, homohexamer.

Functionally, RNA chaperone that binds small regulatory RNA (sRNAs) and mRNAs to facilitate mRNA translational regulation in response to envelope stress, environmental stress and changes in metabolite concentrations. Also binds with high specificity to tRNAs. The polypeptide is RNA-binding protein Hfq (Pelotomaculum thermopropionicum (strain DSM 13744 / JCM 10971 / SI)).